The primary structure comprises 138 residues: Ribulose bisphosphate carboxylase small subunit (138 aa).

Belongs to the RuBisCO small chain family. As to quaternary structure, heterohexadecamer of 8 large and 8 small subunits.

The protein resides in the plastid. The protein localises to the chloroplast. RuBisCO catalyzes two reactions: the carboxylation of D-ribulose 1,5-bisphosphate, the primary event in carbon dioxide fixation, as well as the oxidative fragmentation of the pentose substrate in the photorespiration process. Both reactions occur simultaneously and in competition at the same active site. Although the small subunit is not catalytic it is essential for maximal activity. This chain is Ribulose bisphosphate carboxylase small subunit, found in Pyropia haitanensis (Red seaweed).